The following is a 209-amino-acid chain: MLETMRRHGITLAIFAALTTGLTAVVNSLTKSTIAEQAALQHKSLLDQVIPPALYDNDIQNECYLVNANALGNNLPHRLYLARKNGHPVAAALESTAPDGYSGAIQLLVGADFSGKVLGVRVTEHHETPGLGDKIETRISNWINVFSGKTITSNHDQHWAVKKDGGEFDQFTGATITPRAVVNSVKRTALYLQTIPEHLSSLESCGEKS.

The chain crosses the membrane as a helical span at residues 9–29 (GITLAIFAALTTGLTAVVNSL). Residue T175 is modified to FMN phosphoryl threonine.

Belongs to the RnfG family. In terms of assembly, the complex is composed of six subunits: RnfA, RnfB, RnfC, RnfD, RnfE and RnfG. FMN is required as a cofactor.

It localises to the cell inner membrane. Its function is as follows. Part of a membrane-bound complex that couples electron transfer with translocation of ions across the membrane. The protein is Ion-translocating oxidoreductase complex subunit G of Photorhabdus laumondii subsp. laumondii (strain DSM 15139 / CIP 105565 / TT01) (Photorhabdus luminescens subsp. laumondii).